The chain runs to 317 residues: Probable cell division protein WhiA (317 aa).

Residues 281–314 constitute a DNA-binding region (H-T-H motif); it reads SLKELGQMLDPPVGKSGINHRLRRIEKIAEELRK.

This sequence belongs to the WhiA family.

Functionally, involved in cell division and chromosome segregation. This is Probable cell division protein WhiA from Clostridium novyi (strain NT).